The chain runs to 525 residues: Zwittermicin A synthase ZmaJ (525 aa).

Belongs to the ATP-dependent AMP-binding enzyme family.

It catalyses the reaction holo-[peptidyl-carrier protein] + L-serine + ATP = L-seryl-[peptidyl-carrier protein] + AMP + diphosphate. Its pathway is antibiotic biosynthesis. Involved in the biosynthesis of the linear aminopolyol antibiotic zwittermicin A (ZmA). Specifically adenylates L-serine and loads it onto the holo form of ZmaH via a thioester linkage to the phosphopanthetheine moiety. The chain is Zwittermicin A synthase ZmaJ from Bacillus cereus.